A 210-amino-acid polypeptide reads, in one-letter code: MPPYTVVYFPVRGRCAALRMLLADQGQSWKEEVVTVETWQEGSLKASCLYGQLPKFQDGDLTLYQSNTILRHLGRTLGLYGKDQQEAALVDMVNDGVEDLRCKYISLIYTNYEAGKDDYVKALPGQLKPFETLLSQNQGGKTFIVGDQISFADYNLLDLLLIHEVLAPGCLDAFPLLSAYVGRLSARPKLKAFLASPEYVNLPINGNGKQ.

Positions 2–81 (PPYTVVYFPV…HLGRTLGLYG (80 aa)) constitute a GST N-terminal domain. Y4 carries the post-translational modification Phosphotyrosine; by EGFR. Glutathione contacts are provided by residues Y8, R14, W39, K45, and 52–53 (QL). The residue at position 62 (T62) is a Phosphothreonine. Position 65 to 66 (65 to 66 (QS)) interacts with glutathione. A GST C-terminal domain is found at 83–204 (DQQEAALVDM…ASPEYVNLPI (122 aa)). 2 positions are modified to N6-succinyllysine: K103 and K116. N6-acetyllysine is present on K128. Y199 carries the phosphotyrosine; by EGFR modification.

The protein belongs to the GST superfamily. Pi family. In terms of assembly, homodimer. Interacts with CDK5.

The protein resides in the cytoplasm. It is found in the mitochondrion. Its subcellular location is the nucleus. It catalyses the reaction RX + glutathione = an S-substituted glutathione + a halide anion + H(+). It carries out the reaction prostaglandin J2 + glutathione = prostaglandin J2-S-(R)-glutathione. The enzyme catalyses prostaglandin J2 + glutathione = prostaglandin J2-S-(S)-glutathione. The catalysed reaction is prostaglandin A2 + glutathione = prostaglandin A2-S-(S)-glutathione. It catalyses the reaction 11(S)-hydroxy-14(S),15(S)-epoxy-(5Z,8Z,12E)-eicosatrienoate + glutathione = (11S,15S)-dihydroxy-14(R)-S-glutathionyl-(5Z,8Z,12E)-eicosatrienoate. Its function is as follows. Conjugation of reduced glutathione to a wide number of exogenous and endogenous hydrophobic electrophiles. Involved in the formation of glutathione conjugates of both prostaglandin A2 (PGA2) and prostaglandin J2 (PGJ2). Participates in the formation of novel hepoxilin regioisomers. Negatively regulates CDK5 activity via p25/p35 translocation to prevent neurodegeneration. This Homo sapiens (Human) protein is Glutathione S-transferase P.